Consider the following 2555-residue polypeptide: Squalestatin hexaketide synthase clz14 (2555 aa).

Residues 1 to 84 (MDVSKEAGHH…PNATSTTTTT (84 aa)) are disordered. Residues 10–84 (HANGFANGNT…PNATSTTTTT (75 aa)) show a composition bias toward low complexity. The Ketosynthase family 3 (KS3) domain occupies 91–511 (QVPVAICGIG…GSNTHIIIDS (421 aa)). Residues cysteine 261, histidine 398, and histidine 435 each act as for beta-ketoacyl synthase activity in the active site. Residues 611–928 (FIFTGQGAQW…LEGIGKLFCF (318 aa)) form a malonyl-CoA:ACP transacylase (MAT) domain region. Residues 975–1104 (HELLGERSLE…GLVTASVVTS (130 aa)) form an N-terminal hotdog fold region. The interval 975–1256 (HELLGERSLE…RGFKCKKTDD (282 aa)) is dehydratase (DH) domain. The 286-residue stretch at 975–1260 (HELLGERSLE…CKKTDDAFIQ (286 aa)) folds into the PKS/mFAS DH domain. The active-site Proton acceptor; for dehydratase activity is the histidine 1007. The segment at 1117–1260 (SRKVDTSRWY…CKKTDDAFIQ (144 aa)) is C-terminal hotdog fold. Catalysis depends on aspartate 1177, which acts as the Proton donor; for dehydratase activity. The tract at residues 1424–1595 (SFFQAAGLNK…GFEGAGTVVL (172 aa)) is methyltransferase (CMet) domain. Residues 1821 to 2141 (GMLNTLHWVG…RGVHMGRIVV (321 aa)) form an enoyl reductase (ER) (ER) domain region. Positions 2165–2338 (STYLLTGGMG…PASVIDIAAI (174 aa)) are ketoreductase (KR) domain. One can recognise a Carrier domain in the interval 2468–2546 (IIFAQEIAKR…SLGRLATKRL (79 aa)). Residue serine 2505 is modified to O-(pantetheine 4'-phosphoryl)serine.

The protein operates within secondary metabolite biosynthesis. In terms of biological role, highly reducing polyketide synthase (HR-PKS); part of the gene cluster that mediates the biosynthesis of squalestatin S1 (SQS1, also known as zaragozic acid A), a heavily oxidized fungal polyketide that offers potent cholesterol lowering activity by targeting squalene synthase (SS). SQS1 is composed of a 2,8-dioxobicyclic[3.2.1]octane-3,4,5-tricarboxyclic acid core that is connected to two lipophilic polyketide arms. These initial steps feature the priming of an unusual benzoic acid starter unit onto the highly reducing polyketide synthase clz14, followed by oxaloacetate extension and product release to generate a tricarboxylic acid containing product. The phenylalanine ammonia lyase (PAL) clz10 and the acyl-CoA ligase clz12 are involved in transforming phenylalanine into benzoyl-CoA. The citrate synthase-like protein clz17 is involved in connecting the C-alpha-carbons of the hexaketide chain and oxaloacetate to afford the tricarboxylic acid unit. The potential hydrolytic enzymes, clz11 and clz13, are in close proximity to pks2 and may participate in product release. On the other side, the tetraketide arm is synthesized by a the squalestatin tetraketide synthase clz2 and enzymatically esterified to the core in the last biosynthetic step, by the acetyltransferase clz6. The biosynthesis of the tetraketide must involve 3 rounds of chain extension. After the first and second rounds methyl-transfer occurs, and in all rounds of extension the ketoreductase and dehydratase are active. The enoyl reductase and C-MeT of clz2 are not active in the final round of extension. The acetyltransferase clz6 appears to have a broad substrate selectivity for its acyl CoA substrate, allowing the in vitro synthesis of novel squalestatins. The biosynthesis of SQS1 requires several oxidative steps likely performed by oxidoreductases clz3, clz15 and clz16. Finally, in support of the identification of the cluster as being responsible for SQS1 production, the cluster contains a gene encoding a putative squalene synthase (SS) clz20, suggesting a likely mechanism for self-resistance. The sequence is that of Squalestatin hexaketide synthase clz14 from Cochliobolus lunatus (Filamentous fungus).